A 136-amino-acid chain; its full sequence is NADPH-dependent 7-cyano-7-deazaguanine reductase (136 aa).

Cys-50 (thioimide intermediate) is an active-site residue. Catalysis depends on Asp-57, which acts as the Proton donor. Residues 72 to 74 and 91 to 92 contribute to the substrate site; these read YEL and HE.

It belongs to the GTP cyclohydrolase I family. QueF type 1 subfamily.

Its subcellular location is the cytoplasm. The enzyme catalyses 7-aminomethyl-7-carbaguanine + 2 NADP(+) = 7-cyano-7-deazaguanine + 2 NADPH + 3 H(+). The protein operates within tRNA modification; tRNA-queuosine biosynthesis. In terms of biological role, catalyzes the NADPH-dependent reduction of 7-cyano-7-deazaguanine (preQ0) to 7-aminomethyl-7-deazaguanine (preQ1). This chain is NADPH-dependent 7-cyano-7-deazaguanine reductase, found in Prochlorococcus marinus (strain MIT 9215).